A 251-amino-acid polypeptide reads, in one-letter code: Octanoyltransferase (251 aa).

A BPL/LPL catalytic domain is found at 56 to 237 (ADTGDEIWVV…RLIANLDGES (182 aa)). Residues 96 to 103 (RGGQITYH), 168 to 170 (ALG), and 181 to 183 (GLS) each bind substrate. Catalysis depends on C199, which acts as the Acyl-thioester intermediate.

This sequence belongs to the LipB family.

It is found in the cytoplasm. It catalyses the reaction octanoyl-[ACP] + L-lysyl-[protein] = N(6)-octanoyl-L-lysyl-[protein] + holo-[ACP] + H(+). The protein operates within protein modification; protein lipoylation via endogenous pathway; protein N(6)-(lipoyl)lysine from octanoyl-[acyl-carrier-protein]: step 1/2. Catalyzes the transfer of endogenously produced octanoic acid from octanoyl-acyl-carrier-protein onto the lipoyl domains of lipoate-dependent enzymes. Lipoyl-ACP can also act as a substrate although octanoyl-ACP is likely to be the physiological substrate. This is Octanoyltransferase from Burkholderia ambifaria (strain ATCC BAA-244 / DSM 16087 / CCUG 44356 / LMG 19182 / AMMD) (Burkholderia cepacia (strain AMMD)).